The sequence spans 310 residues: tRNA uridine(34) hydroxylase (310 aa).

The Rhodanese domain occupies 124–218; sequence SDPEVLLIDT…YFEEVAQEES (95 aa). Residue cysteine 178 is the Cysteine persulfide intermediate of the active site.

This sequence belongs to the TrhO family.

The enzyme catalyses uridine(34) in tRNA + AH2 + O2 = 5-hydroxyuridine(34) in tRNA + A + H2O. Its function is as follows. Catalyzes oxygen-dependent 5-hydroxyuridine (ho5U) modification at position 34 in tRNAs. The protein is tRNA uridine(34) hydroxylase of Pseudomonas entomophila (strain L48).